Here is a 67-residue protein sequence, read N- to C-terminus: Gallinacin-6 (67 aa).

Positions 1-19 are cleaved as a signal peptide; it reads MRILYLLLSVLFVVLQGVA. The propeptide occupies 20–25; it reads GQPYFS. Cystine bridges form between C31–C60, C38–C53, and C43–C61.

It belongs to the beta-defensin family. As to expression, expressed in bone marrow, testis, ovary, lung and trachea. Expressed in the ovarian stroma, but not in the ovarian follicles.

The protein resides in the secreted. Its subcellular location is the cytoplasmic granule. Its function is as follows. Has bactericidal activity. Potent activity against S.typhimurium and S.entiriditis. The polypeptide is Gallinacin-6 (GAL6) (Gallus gallus (Chicken)).